Here is a 145-residue protein sequence, read N- to C-terminus: Galectin-5 (145 aa).

N-acetylserine is present on serine 2. Positions 17 to 145 (FFTSIPNGLY…GDIQLTHVET (129 aa)) constitute a Galectin domain. 77–83 (WGPEERS) lines the a beta-D-galactoside pocket.

Monomer. Erythrocytes.

Functionally, may function in erythrocyte differentiation. The chain is Galectin-5 (Lgals5) from Rattus norvegicus (Rat).